A 955-amino-acid polypeptide reads, in one-letter code: Anoctamin-4 (955 aa).

The Cytoplasmic segment spans residues 1–352 (MEASSSGITN…FGEKIGLYFA (352 aa)). Positions 73-97 (KDDDSLLHPGNLTSTSEDTSRLEAG) are disordered. The chain crosses the membrane as a helical span at residues 353 to 373 (WLGWYTGMLFPAAFIGLFVFL). Over 374 to 424 (YGVTTLDHCQVSKEVCQATDIIMCPVCDKYCPFMRLSDSCVYAKVTHLFDN) the chain is Extracellular. The helical transmembrane segment at 425–445 (GATVFFAVFMAVWATVFLEFW) threads the bilayer. Topologically, residues 446-505 (KRRRAVIAYDWDLIDWEEEEEEIRPQFEAKYSKKERMNPISGKPEPYQAFTDKCSRLIVS) are cytoplasmic. A helical membrane pass occupies residues 506-526 (ASGIFFMICVVIAAVFGIVIY). Over 527–547 (RVVTVSTFAAFKWALIRNNSQ) the chain is Extracellular. Asn-544 is a glycosylation site (N-linked (GlcNAc...) asparagine). The helical transmembrane segment at 548–568 (VATTGTAVCINFCIIMLLNVL) threads the bilayer. Residues 569 to 595 (YEKVALLLTNLEQPRTESEWENSFTLK) lie on the Cytoplasmic side of the membrane. A helical membrane pass occupies residues 596–616 (MFLFQFVNLNSSTFYIAFFLG). Residues 617 to 715 (RFTGHPGAYL…AYGLFDEYLE (99 aa)) are Extracellular-facing. The helical transmembrane segment at 716–736 (MILQFGFTTIFVAAFPLAPLL) threads the bilayer. Over 737-768 (ALLNNIIEIRLDAYKFVTQWRRPLASRAKDIG) the chain is Cytoplasmic. The helical transmembrane segment at 769 to 789 (IWYGILEGIGILSVITNAFVI) threads the bilayer. At 790–885 (AITSDFIPRL…QFWHVLAARL (96 aa)) the chain is on the extracellular side. Residues Asn-824 and Asn-837 are each glycosylated (N-linked (GlcNAc...) asparagine). Residues 886–906 (AFIIVFEHLVFCIKHLISYLI) form a helical membrane-spanning segment. At 907–955 (PDLPKDLRDRMRREKYLIQEMMYEAELERLQKERKERKKNGKAHHNEWP) the chain is on the cytoplasmic side.

The protein belongs to the anoctamin family. Predominantly expressed in neuronal tissues. Expressed at low levels in ovary, uterus, heart and brain.

It is found in the cell membrane. It catalyses the reaction a 1,2-diacyl-sn-glycero-3-phospho-L-serine(in) = a 1,2-diacyl-sn-glycero-3-phospho-L-serine(out). The catalysed reaction is a beta-D-galactosyl-(1&lt;-&gt;1')-N-acylsphing-4-enine(out) = a beta-D-galactosyl-(1&lt;-&gt;1')-N-acylsphing-4-enine(in). It carries out the reaction a 1,2-diacyl-sn-glycero-3-phosphocholine(in) = a 1,2-diacyl-sn-glycero-3-phosphocholine(out). Functionally, has calcium-dependent phospholipid scramblase activity; scrambles phosphatidylserine, phosphatidylcholine and galactosylceramide. Does not exhibit calcium-activated chloride channel (CaCC) activity. This chain is Anoctamin-4, found in Mus musculus (Mouse).